The primary structure comprises 361 residues: Diacylglycerol O-acyltransferase 2 (361 aa).

Topologically, residues 1 to 42 (MKTIIAAYSGVLRGTGSSLLSAVHDLPNIPWLSKSSVVRHLQ) are cytoplasmic. Residues 43–61 (IISVLQWVLSFLILGVACT) form a helical membrane-spanning segment. Topologically, residues 62–65 (AVLV) are lumenal. The helical transmembrane segment at 66–85 (YIFCTDLWLIAALYLTWMVL) threads the bilayer. Over 86–361 (DWNTPYKGGR…LHDSEMLEIV (276 aa)) the chain is Cytoplasmic.

It belongs to the diacylglycerol acyltransferase family.

The protein localises to the endoplasmic reticulum membrane. Its subcellular location is the lipid droplet. It localises to the cytoplasm. The protein resides in the perinuclear region. It catalyses the reaction an acyl-CoA + a 1,2-diacyl-sn-glycerol = a triacyl-sn-glycerol + CoA. It carries out the reaction all-trans-retinol + an acyl-CoA = an all-trans-retinyl ester + CoA. The catalysed reaction is 2-(9Z-octadecenoyl)-glycerol + (9Z)-octadecenoyl-CoA = 1,2-di-(9Z-octadecenoyl)-sn-glycerol + CoA. The enzyme catalyses 1,2-di-(9Z-octadecenoyl)-sn-glycerol + (9Z)-octadecenoyl-CoA = 1,2,3-tri-(9Z-octadecenoyl)-glycerol + CoA. It catalyses the reaction all-trans-retinol + hexadecanoyl-CoA = all-trans-retinyl hexadecanoate + CoA. It carries out the reaction 1-O-(9Z-octadecenyl)-glycerol + (9Z)-octadecenoyl-CoA = 1-O-(9Z-octadecyl)-3-(9Z-octadecenoyl)-glycerol + CoA. The catalysed reaction is 1-(9Z-octadecenoyl)-glycerol + (9Z)-octadecenoyl-CoA = 1,2-di-(9Z-octadecenoyl)-glycerol + CoA. The enzyme catalyses 1,2-di-(9Z-octadecenoyl)-sn-glycerol + hexadecanoyl-CoA = 1,2-di-(9Z)-octadecenoyl-3-hexadecanoyl-sn-glycerol + CoA. It catalyses the reaction 1,3-di-(9Z-octadecenoyl)-glycerol + (9Z)-octadecenoyl-CoA = 1,2,3-tri-(9Z-octadecenoyl)-glycerol + CoA. It carries out the reaction 2,3-di-(9Z)-octadecenoyl-sn-glycerol + (9Z)-octadecenoyl-CoA = 1,2,3-tri-(9Z-octadecenoyl)-glycerol + CoA. The catalysed reaction is 2-(9Z-octadecenoyl)-glycerol + hexadecanoyl-CoA = 1-hexadecanoyl-2-(9Z-octadecenoyl)-sn-glycerol + CoA. It participates in glycerolipid metabolism; triacylglycerol biosynthesis. Functionally, essential acyltransferase that catalyzes the terminal and only committed step in triacylglycerol synthesis by using diacylglycerol and fatty acyl CoA as substrates. Required for synthesis and storage of intracellular triglycerides. Probably plays a central role in cytosolic lipid accumulation. The polypeptide is Diacylglycerol O-acyltransferase 2 (dgat2) (Xenopus tropicalis (Western clawed frog)).